The following is a 302-amino-acid chain: GATA transcription factor 28 (302 aa).

The segment at 47–66 (NAGGMSEGVETDIPSHPGNV) is disordered. Residues 77–112 (GSEQGDQLTLSFQGQVYVFDSVLPEKVQAVLLLLGG) enclose the Tify domain. The interval 119–141 (APPGLGSPHQNNRVSSLPGTPQR) is disordered. Positions 126–141 (PHQNNRVSSLPGTPQR) are enriched in polar residues. A CCT domain is found at 147–189 (RLASLVRFREKRKGRNFDKKIRYTVRKEVALRMQRNKGQFTSA). The GATA-type zinc finger occupies 217–273 (QHQEISCRHCGIGEKSTPMMRRGPAGPRTLCNACGLMWANKGAFRDLSKASPQTAQN).

The protein belongs to the type IV zinc-finger family. Class C subfamily. As to expression, predominantly expressed in shoot apices, inflorescences and roots.

The protein resides in the nucleus. Its function is as follows. Transcriptional activator that specifically binds 5'-GATA-3' or 5'-GAT-3' motifs within gene promoters. This is GATA transcription factor 28 (GATA28) from Arabidopsis thaliana (Mouse-ear cress).